The sequence spans 298 residues: ADP/ATP translocase 3 (298 aa).

Position 1 is an N-acetylmethionine (methionine 1). Topologically, residues methionine 1–serine 7 are mitochondrial intermembrane. The residue at position 2 (threonine 2) is an N-acetylthreonine; in ADP/ATP translocase 3, N-terminally processed. A Solcar 1 repeat occupies isoleucine 6–isoleucine 98. The helical transmembrane segment at phenylalanine 8 to glutamine 37 threads the bilayer. The Mitochondrial matrix segment spans residues valine 38 to asparagine 74. Lysine 52 is modified (N6,N6,N6-trimethyllysine). The chain crosses the membrane as a helical span at residues leucine 75–phenylalanine 99. The ADP site is built by arginine 80 and lysine 92. Over leucine 100–phenylalanine 109 the chain is Mitochondrial intermembrane. Lysine 105 is modified (N6-acetyllysine). A helical membrane pass occupies residues tryptophan 110–phenylalanine 130. Solcar repeat units lie at residues arginine 111–methionine 201 and valine 212–valine 297. Residues valine 131–serine 178 are Mitochondrial matrix-facing. The helical transmembrane segment at valine 179–lysine 199 threads the bilayer. Residues glycine 200–isoleucine 210 are Mitochondrial intermembrane-facing. The helical transmembrane segment at valine 211 to phenylalanine 231 threads the bilayer. Residues aspartate 232–glycine 273 lie on the Mitochondrial matrix side of the membrane. Arginine 235 serves as a coordination point for ADP. The segment at arginine 235–methionine 240 is important for transport activity. Residues arginine 235–methionine 240 carry the Nucleotide carrier signature motif motif. Position 268 is an N6-acetyllysine (lysine 268). Residues alanine 274 to tyrosine 291 traverse the membrane as a helical segment. The Mitochondrial intermembrane portion of the chain corresponds to aspartate 292–isoleucine 298.

Belongs to the mitochondrial carrier (TC 2.A.29) family. In terms of assembly, monomer. Found in a complex with ARL2, ARL2BP and SLC25A6/ANT3. As to quaternary structure, (Microbial infection) Interacts with influenza A virus PB1-F2 protein. (Microbial infection) Interacts with HIV-1 Vpr. In terms of processing, trimethylated by ANTKMT at Lys-52. As to expression, expressed in erythrocytes (at protein level).

Its subcellular location is the mitochondrion inner membrane. It is found in the membrane. It catalyses the reaction ADP(in) + ATP(out) = ADP(out) + ATP(in). The enzyme catalyses H(+)(in) = H(+)(out). Its activity is regulated as follows. The matrix-open state (m-state) is inhibited by the membrane-permeable bongkrekic acid (BKA). The cytoplasmic-open state (c-state) is inhibited by the membrane-impermeable toxic inhibitor carboxyatractyloside (CATR). Proton transporter activity is inhibited by ADP:ATP antiporter activity. ADP:ATP antiporter that mediates import of ADP into the mitochondrial matrix for ATP synthesis, and export of ATP out to fuel the cell. Cycles between the cytoplasmic-open state (c-state) and the matrix-open state (m-state): operates by the alternating access mechanism with a single substrate-binding site intermittently exposed to either the cytosolic (c-state) or matrix (m-state) side of the inner mitochondrial membrane. In addition to its ADP:ATP antiporter activity, also involved in mitochondrial uncoupling and mitochondrial permeability transition pore (mPTP) activity. Plays a role in mitochondrial uncoupling by acting as a proton transporter: proton transport uncouples the proton flows via the electron transport chain and ATP synthase to reduce the efficiency of ATP production and cause mitochondrial thermogenesis. Proton transporter activity is inhibited by ADP:ATP antiporter activity, suggesting that SLC25A6/ANT3 acts as a master regulator of mitochondrial energy output by maintaining a delicate balance between ATP production (ADP:ATP antiporter activity) and thermogenesis (proton transporter activity). Proton transporter activity requires free fatty acids as cofactor, but does not transport it. Also plays a key role in mPTP opening, a non-specific pore that enables free passage of the mitochondrial membranes to solutes of up to 1.5 kDa, and which contributes to cell death. It is however unclear if SLC25A6/ANT3 constitutes a pore-forming component of mPTP or regulates it. This chain is ADP/ATP translocase 3, found in Homo sapiens (Human).